A 213-amino-acid chain; its full sequence is Probable nicotinate-nucleotide adenylyltransferase (213 aa).

It belongs to the NadD family.

The catalysed reaction is nicotinate beta-D-ribonucleotide + ATP + H(+) = deamido-NAD(+) + diphosphate. It participates in cofactor biosynthesis; NAD(+) biosynthesis; deamido-NAD(+) from nicotinate D-ribonucleotide: step 1/1. Its function is as follows. Catalyzes the reversible adenylation of nicotinate mononucleotide (NaMN) to nicotinic acid adenine dinucleotide (NaAD). This chain is Probable nicotinate-nucleotide adenylyltransferase, found in Citrobacter koseri (strain ATCC BAA-895 / CDC 4225-83 / SGSC4696).